The chain runs to 358 residues: Mannonate dehydratase (358 aa).

Belongs to the mannonate dehydratase family. It depends on Fe(2+) as a cofactor. Mn(2+) is required as a cofactor.

The catalysed reaction is D-mannonate = 2-dehydro-3-deoxy-D-gluconate + H2O. It functions in the pathway carbohydrate metabolism; pentose and glucuronate interconversion. In terms of biological role, catalyzes the dehydration of D-mannonate. This is Mannonate dehydratase from Lactococcus lactis subsp. cremoris (strain MG1363).